The primary structure comprises 167 residues: Small ribosomal subunit protein uS9 (167 aa).

Disordered regions lie at residues 1 to 45 and 137 to 167; these read MSEY…GGAT and KAGFLTRDPRATERKKAGLKKARKAPQFSKR. Residues 9 to 19 are compositionally biased toward acidic residues; it reads DTVEDITESDE. A compositionally biased stretch (polar residues) spans 20 to 36; the sequence is FTGTYTSESSTPATGGN. The span at 143 to 152 shows a compositional bias: basic and acidic residues; it reads RDPRATERKK. A compositionally biased stretch (basic residues) spans 153–167; sequence AGLKKARKAPQFSKR.

The protein belongs to the universal ribosomal protein uS9 family.

The sequence is that of Small ribosomal subunit protein uS9 from Kineococcus radiotolerans (strain ATCC BAA-149 / DSM 14245 / SRS30216).